The following is an 823-amino-acid chain: Translation initiation factor IF-2 (823 aa).

2 disordered regions span residues 30–66 and 156–192; these read VPPS…DDKR and TPSH…IKKV. The span at 36-48 shows a compositional bias: polar residues; the sequence is RGTSTGKSFTTVE. A compositionally biased stretch (basic and acidic residues) spans 56 to 66; sequence PGEYISHDDKR. Positions 322–491 constitute a tr-type G domain; that stretch reads PRPPVVTVMG…LLLAEMLELS (170 aa). Residues 331-338 form a G1 region; the sequence is GHVDHGKT. 331 to 338 is a GTP binding site; the sequence is GHVDHGKT. The segment at 356–360 is G2; it reads GITQH. Residues 377–380 are G3; the sequence is DTPG. Residues 377–381 and 431–434 contribute to the GTP site; these read DTPGH and NKID. The G4 stretch occupies residues 431–434; the sequence is NKID. Residues 467–469 are G5; sequence SAK.

This sequence belongs to the TRAFAC class translation factor GTPase superfamily. Classic translation factor GTPase family. IF-2 subfamily.

It is found in the cytoplasm. In terms of biological role, one of the essential components for the initiation of protein synthesis. Protects formylmethionyl-tRNA from spontaneous hydrolysis and promotes its binding to the 30S ribosomal subunits. Also involved in the hydrolysis of GTP during the formation of the 70S ribosomal complex. This Anaplasma phagocytophilum (strain HZ) protein is Translation initiation factor IF-2.